The sequence spans 534 residues: UDP-glucuronosyltransferase 2A3 (534 aa).

The first 18 residues, 1–18, serve as a signal peptide directing secretion; sequence MVSEKCVAAFFLLQLCWA. At 19–493 the chain is on the extracellular side; it reads GCGFCSKVLV…SWFQYHSLDV (475 aa). An N-linked (GlcNAc...) asparagine glycan is attached at Asn-102. Residue Lys-135 is modified to N6-succinyllysine. Residue Asn-204 is glycosylated (N-linked (GlcNAc...) asparagine). A helical transmembrane segment spans residues 494–514; the sequence is IGFLLLCVVTLTFIITKFCLF. The Cytoplasmic segment spans residues 515 to 534; the sequence is VCQKLYMKESKKMGNRKKKN.

Belongs to the UDP-glycosyltransferase family. Highly expressed in liver, with lower levels in duodenum and jejunum.

It localises to the membrane. The enzyme catalyses glucuronate acceptor + UDP-alpha-D-glucuronate = acceptor beta-D-glucuronoside + UDP + H(+). UDP-glucuronosyltransferases catalyze phase II biotransformation reactions in which lipophilic substrates are conjugated with glucuronic acid to increase water solubility and enhance excretion. They are of major importance in the conjugation and subsequent elimination of potentially toxic xenobiotics and endogenous compounds. The polypeptide is UDP-glucuronosyltransferase 2A3 (Ugt2a3) (Mus musculus (Mouse)).